A 500-amino-acid chain; its full sequence is L-aspartate semialdehyde sulfurtransferase (500 aa).

Cysteine 131 serves as the catalytic Cysteine persulfide intermediate. CBS domains are found at residues methionine 384–serine 441 and methionine 446–tyrosine 500.

Belongs to the L-aspartate semialdehyde sulfurtransferase family. As to quaternary structure, forms homodimers. May form a complex with MA_1822.

It carries out the reaction L-aspartate 4-semialdehyde + reduced 2[4Fe-4S]-[ferredoxin] + hydrogen sulfide + 3 H(+) = oxidized 2[4Fe-4S]-[ferredoxin] + L-homocysteine + H2O. The protein operates within amino-acid biosynthesis. Functionally, required for O-acetylhomoserine sulfhydrylase (OAHS)-independent homocysteine (Hcy) biosynthesis. Together with MA_1822, catalyzes the condensation of sulfide with aspartate semialdehyde to generate homocysteine. Likely functions through persulfide intermediate. The polypeptide is L-aspartate semialdehyde sulfurtransferase (Methanosarcina acetivorans (strain ATCC 35395 / DSM 2834 / JCM 12185 / C2A)).